Consider the following 448-residue polypeptide: Probable alpha-galactosidase B (448 aa).

Positions 1–23 (MSRFHLPLAAAVVLVSCLWSANA) are cleaved as a signal peptide. Intrachain disulfides connect C46–C78 and C128–C158. The active-site Nucleophile is the D156. Residues N163 and N181 are each glycosylated (N-linked (GlcNAc...) asparagine). A substrate-binding site is contributed by 226–230 (EWGQA). The N-linked (GlcNAc...) asparagine glycan is linked to N237. D248 serves as the catalytic Proton donor.

The protein belongs to the glycosyl hydrolase 27 family.

Its subcellular location is the secreted. It catalyses the reaction Hydrolysis of terminal, non-reducing alpha-D-galactose residues in alpha-D-galactosides, including galactose oligosaccharides, galactomannans and galactolipids.. Functionally, hydrolyzes a variety of simple alpha-D-galactoside as well as more complex molecules such as oligosaccharides and polysaccharides. The polypeptide is Probable alpha-galactosidase B (aglB) (Aspergillus clavatus (strain ATCC 1007 / CBS 513.65 / DSM 816 / NCTC 3887 / NRRL 1 / QM 1276 / 107)).